We begin with the raw amino-acid sequence, 357 residues long: UDP-3-O-acylglucosamine N-acyltransferase (357 aa).

Catalysis depends on H258, which acts as the Proton acceptor.

Belongs to the transferase hexapeptide repeat family. LpxD subfamily. Homotrimer.

The enzyme catalyses a UDP-3-O-[(3R)-3-hydroxyacyl]-alpha-D-glucosamine + a (3R)-hydroxyacyl-[ACP] = a UDP-2-N,3-O-bis[(3R)-3-hydroxyacyl]-alpha-D-glucosamine + holo-[ACP] + H(+). Its pathway is bacterial outer membrane biogenesis; LPS lipid A biosynthesis. In terms of biological role, catalyzes the N-acylation of UDP-3-O-acylglucosamine using 3-hydroxyacyl-ACP as the acyl donor. Is involved in the biosynthesis of lipid A, a phosphorylated glycolipid that anchors the lipopolysaccharide to the outer membrane of the cell. The chain is UDP-3-O-acylglucosamine N-acyltransferase from Azorhizobium caulinodans (strain ATCC 43989 / DSM 5975 / JCM 20966 / LMG 6465 / NBRC 14845 / NCIMB 13405 / ORS 571).